The primary structure comprises 240 residues: Uridylate kinase (240 aa).

An ATP-binding site is contributed by 15–18 (KLSG). The interval 23 to 28 (GSEGFG) is involved in allosteric activation by GTP. Gly-57 provides a ligand contact to UMP. ATP-binding residues include Gly-58 and Arg-62. UMP is bound by residues Asp-77 and 138–145 (TGNPFFTT). Residues Thr-165, Tyr-171, and Asp-174 each coordinate ATP.

This sequence belongs to the UMP kinase family. As to quaternary structure, homohexamer.

Its subcellular location is the cytoplasm. The enzyme catalyses UMP + ATP = UDP + ADP. The protein operates within pyrimidine metabolism; CTP biosynthesis via de novo pathway; UDP from UMP (UMPK route): step 1/1. Its activity is regulated as follows. Allosterically activated by GTP. Inhibited by UTP. In terms of biological role, catalyzes the reversible phosphorylation of UMP to UDP. The protein is Uridylate kinase of Photobacterium profundum (strain SS9).